Consider the following 169-residue polypeptide: Required for excision 1-B domain-containing protein (169 aa).

This is Required for excision 1-B domain-containing protein from Mus musculus (Mouse).